The chain runs to 831 residues: Isethionate sulfite-lyase (831 aa).

Residues 32 to 701 (PRVFRLLERF…VVSATPNGRT (670 aa)) enclose the PFL domain. 2-hydroxyethane-1-sulfonate-binding positions include Arg189, Gln193, 468-470 (CTE), and Arg679. Cys468 acts as the Cysteine radical intermediate in catalysis. Catalysis depends on Glu470, which acts as the Proton acceptor. Positions 708–831 (DGSSASHGAD…LIARTEHDVM (124 aa)) constitute a Glycine radical domain. Gly806 carries the glycine radical modification.

It belongs to the glycyl radical enzyme (GRE) family. Homodimer. Requires the activating protein IslB to generate the key active site glycyl radical on Gly-806 that is involved in catalysis.

It carries out the reaction 2-hydroxyethane-1-sulfonate = acetaldehyde + sulfite + H(+). It participates in organosulfur degradation; alkanesulfonate degradation. Its function is as follows. Involved in an anaerobic respiration pathway that converts the sulfonate isethionate (2-hydroxyethanesulfonate) to ammonia, acetate and sulfide. Catalyzes the radical-mediated C-S bond cleavage of isethionate (2-hydroxyethanesulfonate) to form sulfite and acetaldehyde. The chain is Isethionate sulfite-lyase from Desulfovibrio desulfuricans (strain ATCC 27774 / DSM 6949 / MB).